Consider the following 697-residue polypeptide: Elongation factor G (697 aa).

Residues 10–285 form the tr-type G domain; sequence AKTRNIGIMA…GVIDYLPSPL (276 aa). GTP is bound by residues 19 to 26, 83 to 87, and 137 to 140; these read AHIDAGKT, DTPGH, and NKMD.

Belongs to the TRAFAC class translation factor GTPase superfamily. Classic translation factor GTPase family. EF-G/EF-2 subfamily.

It localises to the cytoplasm. Its function is as follows. Catalyzes the GTP-dependent ribosomal translocation step during translation elongation. During this step, the ribosome changes from the pre-translocational (PRE) to the post-translocational (POST) state as the newly formed A-site-bound peptidyl-tRNA and P-site-bound deacylated tRNA move to the P and E sites, respectively. Catalyzes the coordinated movement of the two tRNA molecules, the mRNA and conformational changes in the ribosome. The protein is Elongation factor G of Lactobacillus helveticus (strain DPC 4571).